We begin with the raw amino-acid sequence, 258 residues long: Large ribosomal subunit protein bL19m (258 aa).

Positions 235 to 258 (SKGLTGGVGGGGGKQKGQESKKKN) are disordered. Gly residues predominate over residues 238–249 (LTGGVGGGGGKQ).

This sequence belongs to the bacterial ribosomal protein bL19 family. In terms of assembly, component of the mitochondrial large ribosomal subunit (mt-LSU). Mature N.crassa 74S mitochondrial ribosomes consist of a small (37S) and a large (54S) subunit. The 37S small subunit contains a 16S ribosomal RNA (16S mt-rRNA) and 32 different proteins. The 54S large subunit contains a 23S rRNA (23S mt-rRNA) and 42 different proteins.

It localises to the mitochondrion. Its function is as follows. Component of the mitochondrial ribosome (mitoribosome), a dedicated translation machinery responsible for the synthesis of mitochondrial genome-encoded proteins, including at least some of the essential transmembrane subunits of the mitochondrial respiratory chain. The mitoribosomes are attached to the mitochondrial inner membrane and translation products are cotranslationally integrated into the membrane. The sequence is that of Large ribosomal subunit protein bL19m (img1) from Neurospora crassa (strain ATCC 24698 / 74-OR23-1A / CBS 708.71 / DSM 1257 / FGSC 987).